We begin with the raw amino-acid sequence, 89 residues long: Small ribosomal subunit protein uS15 (89 aa).

Belongs to the universal ribosomal protein uS15 family. In terms of assembly, part of the 30S ribosomal subunit. Forms a bridge to the 50S subunit in the 70S ribosome, contacting the 23S rRNA.

In terms of biological role, one of the primary rRNA binding proteins, it binds directly to 16S rRNA where it helps nucleate assembly of the platform of the 30S subunit by binding and bridging several RNA helices of the 16S rRNA. Functionally, forms an intersubunit bridge (bridge B4) with the 23S rRNA of the 50S subunit in the ribosome. The sequence is that of Small ribosomal subunit protein uS15 from Micrococcus luteus (strain ATCC 4698 / DSM 20030 / JCM 1464 / CCM 169 / CCUG 5858 / IAM 1056 / NBRC 3333 / NCIMB 9278 / NCTC 2665 / VKM Ac-2230) (Micrococcus lysodeikticus).